The chain runs to 407 residues: Carbamoyl phosphate synthase small chain (407 aa).

Residues 1–205 form a CPSase region; that stretch reads MTETTPKTAP…LQDGYGEQDA (205 aa). Residues Ser-60, Gly-257, and Gly-259 each contribute to the L-glutamine site. Residues 209 to 397 enclose the Glutamine amidotransferase type-1 domain; the sequence is HVVALDFGVK…INLIRERKGQ (189 aa). Cys-286 acts as the Nucleophile in catalysis. L-glutamine-binding residues include Leu-287, Gln-290, Asn-328, Gly-330, and Phe-331. Catalysis depends on residues His-370 and Glu-372.

The protein belongs to the CarA family. In terms of assembly, composed of two chains; the small (or glutamine) chain promotes the hydrolysis of glutamine to ammonia, which is used by the large (or ammonia) chain to synthesize carbamoyl phosphate. Tetramer of heterodimers (alpha,beta)4.

The catalysed reaction is hydrogencarbonate + L-glutamine + 2 ATP + H2O = carbamoyl phosphate + L-glutamate + 2 ADP + phosphate + 2 H(+). It catalyses the reaction L-glutamine + H2O = L-glutamate + NH4(+). Its pathway is amino-acid biosynthesis; L-arginine biosynthesis; carbamoyl phosphate from bicarbonate: step 1/1. The protein operates within pyrimidine metabolism; UMP biosynthesis via de novo pathway; (S)-dihydroorotate from bicarbonate: step 1/3. Its function is as follows. Small subunit of the glutamine-dependent carbamoyl phosphate synthetase (CPSase). CPSase catalyzes the formation of carbamoyl phosphate from the ammonia moiety of glutamine, carbonate, and phosphate donated by ATP, constituting the first step of 2 biosynthetic pathways, one leading to arginine and/or urea and the other to pyrimidine nucleotides. The small subunit (glutamine amidotransferase) binds and cleaves glutamine to supply the large subunit with the substrate ammonia. In Brucella suis (strain ATCC 23445 / NCTC 10510), this protein is Carbamoyl phosphate synthase small chain.